A 525-amino-acid chain; its full sequence is Ribosomal protein S6 kinase beta-1 (525 aa).

The TOS motif motif lies at 28-32 (FDIDL). The segment at 28–54 (FDIDLDQPEDAGSEDELEEGGQLNESM) is disordered. Residues 30–46 (IDLDQPEDAGSEDELEE) are compositionally biased toward acidic residues. The 262-residue stretch at 91 to 352 (FELLRVLGKG…AGEVQAHPFF (262 aa)) folds into the Protein kinase domain. ATP contacts are provided by residues 97–105 (LGKGGYGKV) and K123. D218 (proton acceptor) is an active-site residue. Residue T252 is modified to Phosphothreonine; by PDPK1. Residues 353–423 (RHINWEELLA…VAPSVLESVK (71 aa)) form the AGC-kinase C-terminal domain. Residues 380-399 (SQFDSKFTRQTPVDSPDDST) form a disordered region. Residues 381–399 (QFDSKFTRQTPVDSPDDST) show a composition bias toward polar residues. Position 394 is a phosphoserine (S394). T412 is modified (phosphothreonine; by MTOR, NEK6 and NEK7). The autoinhibitory domain stretch occupies residues 424–525 (EKFSFEPKIR…KRPEHLRMNL (102 aa)). A phosphoserine mark is found at S434 and S441. T444 bears the Phosphothreonine mark. Residues S447 and S452 each carry the phosphoserine modification. Positions 486-509 (VTTSGEASAPLPIRQPNSGPYKKQ) are disordered. Position 516 is an N6-acetyllysine (K516).

This sequence belongs to the protein kinase superfamily. AGC Ser/Thr protein kinase family. S6 kinase subfamily. As to quaternary structure, interacts with PPP1R9A/neurabin-1. Interacts with RPTOR. Interacts with IRS1. Interacts with EIF3B and EIF3C. Interacts with POLDIP3. Interacts with TRAF4. Interacts (via N-terminus) with IER5. Dephosphorylation by PPP1CC at Thr-412 in mitochondrion. Phosphorylation at Thr-412 is regulated by mTORC1. The phosphorylation at this site is maintained by an agonist-dependent autophosphorylation mechanism. Activated by phosphorylation at Thr-252 by PDPK1. In terms of tissue distribution, brain.

Its subcellular location is the cytoplasm. It localises to the synapse. It is found in the synaptosome. The protein localises to the mitochondrion outer membrane. The protein resides in the mitochondrion. The catalysed reaction is L-seryl-[protein] + ATP = O-phospho-L-seryl-[protein] + ADP + H(+). It catalyses the reaction L-threonyl-[protein] + ATP = O-phospho-L-threonyl-[protein] + ADP + H(+). Activation requires multiple phosphorylation events on serine/threonine residues. Activation appears to be first mediated by phosphorylation of multiple sites in the autoinhibitory domain, which facilitates phosphorylation at Thr-412, disrupting the autoinhibitory mechanism and allowing phosphorylation of Thr-252 by PDPK1. The active conformation of the kinase is believed to be stabilized by a mechanism involving three conserved phosphorylation sites located in the kinase domain activation loop (Thr-252) and in the AGC-kinase C-terminal domain (Ser-394 in the middle of the tail/linker region and Thr-412 within a hydrophobic motif at its end). Activated by mTORC1; isoform Alpha I and isoform Alpha II are sensitive to rapamycin, which inhibits activating phosphorylation at Thr-412. Activated by PDPK1. Functionally, serine/threonine-protein kinase that acts downstream of mTOR signaling in response to growth factors and nutrients to promote cell proliferation, cell growth and cell cycle progression. Regulates protein synthesis through phosphorylation of EIF4B, RPS6 and EEF2K, and contributes to cell survival by repressing the pro-apoptotic function of BAD. Under conditions of nutrient depletion, the inactive form associates with the EIF3 translation initiation complex. Upon mitogenic stimulation, phosphorylation by the mechanistic target of rapamycin complex 1 (mTORC1) leads to dissociation from the EIF3 complex and activation. The active form then phosphorylates and activates several substrates in the pre-initiation complex, including the EIF2B complex and the cap-binding complex component EIF4B. Also controls translation initiation by phosphorylating a negative regulator of EIF4A, PDCD4, targeting it for ubiquitination and subsequent proteolysis. Promotes initiation of the pioneer round of protein synthesis by phosphorylating POLDIP3/SKAR. In response to IGF1, activates translation elongation by phosphorylating EEF2 kinase (EEF2K), which leads to its inhibition and thus activation of EEF2. Also plays a role in feedback regulation of mTORC2 by mTORC1 by phosphorylating MAPKAP1/SIN1, MTOR and RICTOR, resulting in the inhibition of mTORC2 and AKT1 signaling. Also involved in feedback regulation of mTORC1 and mTORC2 by phosphorylating DEPTOR. Mediates cell survival by phosphorylating the pro-apoptotic protein BAD and suppressing its pro-apoptotic function. Phosphorylates mitochondrial URI1 leading to dissociation of a URI1-PPP1CC complex. The free mitochondrial PPP1CC can then dephosphorylate RPS6KB1 at Thr-412, which is proposed to be a negative feedback mechanism for the RPS6KB1 anti-apoptotic function. Mediates TNF-alpha-induced insulin resistance by phosphorylating IRS1 at multiple serine residues, resulting in accelerated degradation of IRS1. In cells lacking functional TSC1-2 complex, constitutively phosphorylates and inhibits GSK3B. May be involved in cytoskeletal rearrangement through binding to neurabin. Phosphorylates and activates the pyrimidine biosynthesis enzyme CAD, downstream of MTOR. Following activation by mTORC1, phosphorylates EPRS and thereby plays a key role in fatty acid uptake by adipocytes and also most probably in interferon-gamma-induced translation inhibition. This is Ribosomal protein S6 kinase beta-1 (Rps6kb1) from Rattus norvegicus (Rat).